The primary structure comprises 124 residues: Phosphoribosyl-ATP pyrophosphatase (124 aa).

It belongs to the PRA-PH family.

It localises to the cytoplasm. It carries out the reaction 1-(5-phospho-beta-D-ribosyl)-ATP + H2O = 1-(5-phospho-beta-D-ribosyl)-5'-AMP + diphosphate + H(+). Its pathway is amino-acid biosynthesis; L-histidine biosynthesis; L-histidine from 5-phospho-alpha-D-ribose 1-diphosphate: step 2/9. The chain is Phosphoribosyl-ATP pyrophosphatase from Ralstonia pickettii (strain 12J).